We begin with the raw amino-acid sequence, 170 residues long: Translationally-controlled tumor protein homolog (170 aa).

The 170-residue stretch at 1–170 (MLIYNDILNG…WKHGLKETKV (170 aa)) folds into the TCTP domain.

The protein belongs to the TCTP family.

It is found in the cytoplasm. The protein localises to the cytoskeleton. Involved in protein synthesis. Involved in microtubule stabilization. The polypeptide is Translationally-controlled tumor protein homolog (Gibberella zeae (strain ATCC MYA-4620 / CBS 123657 / FGSC 9075 / NRRL 31084 / PH-1) (Wheat head blight fungus)).